The following is a 1482-amino-acid chain: Chromosome partition protein MukB (1482 aa).

34 to 41 (GGNGAGKS) serves as a coordination point for ATP. Coiled coils occupy residues 326–416 (LEAD…AIQY), 509–603 (RHLA…RAPV), 780–805 (RAAR…ATLS), 835–923 (EAEI…AKLE), 979–1116 (LSGN…AKAG), and 1210–1265 (EAIE…LQSV). The tract at residues 666–783 (PGGAEDSRLN…TLPLFGRAAR (118 aa)) is flexible hinge.

Belongs to the SMC family. MukB subfamily. As to quaternary structure, homodimerization via its hinge domain. Binds to DNA via its C-terminal region. Interacts, and probably forms a ternary complex, with MukE and MukF via its C-terminal region. The complex formation is stimulated by calcium or magnesium. Interacts with tubulin-related protein FtsZ.

Its subcellular location is the cytoplasm. The protein localises to the nucleoid. Its function is as follows. Plays a central role in chromosome condensation, segregation and cell cycle progression. Functions as a homodimer, which is essential for chromosome partition. Involved in negative DNA supercoiling in vivo, and by this means organize and compact chromosomes. May achieve or facilitate chromosome segregation by condensation DNA from both sides of a centrally located replisome during cell division. The chain is Chromosome partition protein MukB from Enterobacter sp. (strain 638).